We begin with the raw amino-acid sequence, 338 residues long: Ribosomal RNA large subunit methyltransferase F (338 aa).

The disordered stretch occupies residues 1–21 (MTQKKNKPTQKKKGLHPRNPH).

The protein belongs to the methyltransferase superfamily. METTL16/RlmF family.

The protein localises to the cytoplasm. It carries out the reaction adenosine(1618) in 23S rRNA + S-adenosyl-L-methionine = N(6)-methyladenosine(1618) in 23S rRNA + S-adenosyl-L-homocysteine + H(+). In terms of biological role, specifically methylates the adenine in position 1618 of 23S rRNA. This is Ribosomal RNA large subunit methyltransferase F from Photobacterium profundum (strain SS9).